Consider the following 60-residue polypeptide: Potassium channel toxin ImKTx88 (60 aa).

An N-terminal signal peptide occupies residues 1–22 (MSNFSVFLIALLFCSVFILSEA). 3 disulfides stabilise this stretch: cysteine 30–cysteine 51, cysteine 36–cysteine 56, and cysteine 40–cysteine 58.

Belongs to the short scorpion toxin superfamily. Potassium channel inhibitor family. Expressed by the venom gland.

The protein localises to the secreted. In terms of biological role, recombinant toxin selectively inhibits Kv1.3/KCNA3 potassium channels with an IC(50) of 91 pM. The protein is Potassium channel toxin ImKTx88 of Isometrus maculatus (Lesser brown scorpion).